Reading from the N-terminus, the 147-residue chain is Large ribosomal subunit protein uL15 (147 aa).

Positions 1 to 57 (MKLHELKSAPKSRNHKAKVVGRGHGSGLGKTSGRGQKGQKARKSGRTRPGFEGGQTP) are disordered. The span at 10–21 (PKSRNHKAKVVG) shows a compositional bias: basic residues. Residues 22–36 (RGHGSGLGKTSGRGQ) are compositionally biased toward gly residues. A compositionally biased stretch (basic residues) spans 37–46 (KGQKARKSGR).

This sequence belongs to the universal ribosomal protein uL15 family. Part of the 50S ribosomal subunit.

Binds to the 23S rRNA. In Mycoplasmoides gallisepticum (strain R(low / passage 15 / clone 2)) (Mycoplasma gallisepticum), this protein is Large ribosomal subunit protein uL15.